We begin with the raw amino-acid sequence, 313 residues long: Intelectin-1a (313 aa).

The N-terminal stretch at 1 to 18 (MTQLGFLLFIMVATRGCS) is a signal peptide. Residues 32–251 (SFFSSLPRSC…NNERAASALC (220 aa)) form the Fibrinogen C-terminal domain. Cysteines 41 and 70 form a disulfide. Ca(2+) contacts are provided by His86, Glu87, Asn89, Gly92, Gly97, Asp98, and Asp133. 3 cysteine pairs are disulfide-bonded: Cys94–Cys280, Cys199–Cys259, and Cys251–Cys265. Ca(2+) contacts are provided by Asn260, Glu262, Glu274, and Asp282. A carbohydrate is bound by residues 262-263 (EH) and Glu274. Ser298 carries the GPI-anchor amidated serine lipid modification. Positions 299 to 313 (SSRKITEAAVLLFYR) are excised as a propeptide.

As to quaternary structure, monomer. May interact with LTF. As to expression, expressed in small intestinal Paneth cells in uninfected mice. Expression also detected in various other tissues including stomach, kidney, ovary and brain.

It is found in the cell membrane. The protein resides in the secreted. Lectin that specifically recognizes microbial carbohydrate chains in a calcium-dependent manner. Binds to microbial glycans that contain a terminal acyclic 1,2-diol moiety, including beta-linked D-galactofuranose (beta-Galf), D-phosphoglycerol-modified glycans, D-glycero-D-talo-oct-2-ulosonic acid (KO) and 3-deoxy-D-manno-oct-2-ulosonic acid (KDO). Binds to glycans from Gram-positive and Gram-negative bacteria, including K.pneumoniae, S.pneumoniae, Y.pestis, P.mirabilis and P.vulgaris. Does not bind mammalian glycans. Probably plays a role in the defense system against microorganisms. May function as adipokine that has no effect on basal glucose uptake but enhances insulin-stimulated glucose uptake in adipocytes. Increases AKT phosphorylation in the absence and presence of insulin. May interact with lactoferrin/LTF and increase its uptake, and may thereby play a role in iron absorption. The chain is Intelectin-1a (Itln1) from Mus musculus (Mouse).